A 110-amino-acid chain; its full sequence is MTQCPFTPCADGLILAVRLTPRAGRTGLDGVRTEPDGRPILCLRVAAPPVEGAANAALTAFVAKSLGLRKSEVTLVSGETARTKRLHLSGDPQALAARATAWFGGDGPGS.

Belongs to the UPF0235 family.

This Methylorubrum populi (strain ATCC BAA-705 / NCIMB 13946 / BJ001) (Methylobacterium populi) protein is UPF0235 protein Mpop_2087.